Consider the following 81-residue polypeptide: Costars family protein ABRACL (81 aa).

N-acetylmethionine is present on M1.

The protein belongs to the costars family.

The chain is Costars family protein ABRACL (ABRACL) from Bos taurus (Bovine).